The sequence spans 73 residues: Metallothionein (73 aa).

Cd(2+) is bound by residues cysteine 15, cysteine 20, cysteine 26, cysteine 28, cysteine 32, cysteine 34, cysteine 39, cysteine 46, cysteine 48, cysteine 52, cysteine 54, cysteine 58, cysteine 64, cysteine 66, cysteine 70, and cysteine 72.

The protein belongs to the metallothionein superfamily. Type 2 family.

Its function is as follows. The metallothioneins are involved in the cellular sequestration of toxic metal ions. The protein is Metallothionein of Dreissena polymorpha (Zebra mussel).